The sequence spans 170 residues: Putative pre-16S rRNA nuclease (170 aa).

The span at 1–18 (MGTDDRLPDRPGADDPGR) shows a compositional bias: basic and acidic residues. Residues 1 to 22 (MGTDDRLPDRPGADDPGRGRRI) are disordered.

The protein belongs to the YqgF nuclease family.

It is found in the cytoplasm. Functionally, could be a nuclease involved in processing of the 5'-end of pre-16S rRNA. The protein is Putative pre-16S rRNA nuclease of Mycolicibacterium smegmatis (strain ATCC 700084 / mc(2)155) (Mycobacterium smegmatis).